A 267-amino-acid polypeptide reads, in one-letter code: 3-methyl-2-oxobutanoate hydroxymethyltransferase (267 aa).

Positions 45 and 84 each coordinate Mg(2+). 3-methyl-2-oxobutanoate contacts are provided by residues 45–46 (DS), Asp-84, and Lys-113. Glu-115 is a Mg(2+) binding site. The Proton acceptor role is filled by Glu-182.

It belongs to the PanB family. Homodecamer; pentamer of dimers. It depends on Mg(2+) as a cofactor.

It localises to the cytoplasm. The catalysed reaction is 3-methyl-2-oxobutanoate + (6R)-5,10-methylene-5,6,7,8-tetrahydrofolate + H2O = 2-dehydropantoate + (6S)-5,6,7,8-tetrahydrofolate. The protein operates within cofactor biosynthesis; coenzyme A biosynthesis. Catalyzes the reversible reaction in which hydroxymethyl group from 5,10-methylenetetrahydrofolate is transferred onto alpha-ketoisovalerate to form ketopantoate. The sequence is that of 3-methyl-2-oxobutanoate hydroxymethyltransferase from Saccharolobus islandicus (strain L.S.2.15 / Lassen #1) (Sulfolobus islandicus).